Reading from the N-terminus, the 465-residue chain is Iron-sulfur cluster assembly SufBD family protein SAR0880 (465 aa).

The protein belongs to the iron-sulfur cluster assembly SufBD family.

The chain is Iron-sulfur cluster assembly SufBD family protein SAR0880 from Staphylococcus aureus (strain MRSA252).